The chain runs to 525 residues: Bifunctional purine biosynthesis protein PurH (525 aa).

The region spanning 1 to 147 is the MGS-like domain; the sequence is MTKIERALIS…KNWAHVAIVT (147 aa).

The protein belongs to the PurH family.

The catalysed reaction is (6R)-10-formyltetrahydrofolate + 5-amino-1-(5-phospho-beta-D-ribosyl)imidazole-4-carboxamide = 5-formamido-1-(5-phospho-D-ribosyl)imidazole-4-carboxamide + (6S)-5,6,7,8-tetrahydrofolate. It carries out the reaction IMP + H2O = 5-formamido-1-(5-phospho-D-ribosyl)imidazole-4-carboxamide. It functions in the pathway purine metabolism; IMP biosynthesis via de novo pathway; 5-formamido-1-(5-phospho-D-ribosyl)imidazole-4-carboxamide from 5-amino-1-(5-phospho-D-ribosyl)imidazole-4-carboxamide (10-formyl THF route): step 1/1. Its pathway is purine metabolism; IMP biosynthesis via de novo pathway; IMP from 5-formamido-1-(5-phospho-D-ribosyl)imidazole-4-carboxamide: step 1/1. The protein is Bifunctional purine biosynthesis protein PurH of Chromobacterium violaceum (strain ATCC 12472 / DSM 30191 / JCM 1249 / CCUG 213 / NBRC 12614 / NCIMB 9131 / NCTC 9757 / MK).